Reading from the N-terminus, the 284-residue chain is Bifunctional protein FolD (284 aa).

NADP(+)-binding positions include 166–168 and Ile232; that span reads GAS.

It belongs to the tetrahydrofolate dehydrogenase/cyclohydrolase family. As to quaternary structure, homodimer.

The catalysed reaction is (6R)-5,10-methylene-5,6,7,8-tetrahydrofolate + NADP(+) = (6R)-5,10-methenyltetrahydrofolate + NADPH. The enzyme catalyses (6R)-5,10-methenyltetrahydrofolate + H2O = (6R)-10-formyltetrahydrofolate + H(+). Its pathway is one-carbon metabolism; tetrahydrofolate interconversion. Its function is as follows. Catalyzes the oxidation of 5,10-methylenetetrahydrofolate to 5,10-methenyltetrahydrofolate and then the hydrolysis of 5,10-methenyltetrahydrofolate to 10-formyltetrahydrofolate. The chain is Bifunctional protein FolD from Shewanella sp. (strain W3-18-1).